The primary structure comprises 217 residues: Claudin-9 (217 aa).

Over 1–12 the chain is Cytoplasmic; it reads MASTGLELLGMT. A helical transmembrane segment spans residues 13-33; sequence LAVLGWLGTLVSCALPLWKVT. The Extracellular segment spans residues 34–81; that stretch reads AFIGNSIVVAQVVWEGLWMSCVVQSTGQMQCKVYDSLLALPQDLQAAR. A helical membrane pass occupies residues 82–102; the sequence is ALCVVALLLALLGLLVAITGA. At 103 to 116 the chain is on the cytoplasmic side; it reads QCTTCVEDEGAKAR. Residues 117-137 traverse the membrane as a helical segment; it reads IVLTAGVLLLLSGILVLIPVC. The Extracellular portion of the chain corresponds to 138-159; that stretch reads WTAHAIIQDFYNPLVAEALKRE. A helical membrane pass occupies residues 160–180; that stretch reads LGASLYLGWAAAALLMLGGGL. Residues 181–217 are Cytoplasmic-facing; sequence LCCTCPPSHFERPRGPRLGYSIPSRSGASGLDKRDYV.

It belongs to the claudin family. Interacts with CLDN1, CD81 and OCLN.

The protein localises to the cell junction. The protein resides in the tight junction. It is found in the cell membrane. Plays a major role in tight junction-specific obliteration of the intercellular space, through calcium-independent cell-adhesion activity. This is Claudin-9 (Cldn9) from Mus musculus (Mouse).